Here is a 355-residue protein sequence, read N- to C-terminus: Protein RecA (355 aa).

Residue 67 to 74 (GPESSGKT) coordinates ATP.

This sequence belongs to the RecA family.

The protein localises to the cytoplasm. Can catalyze the hydrolysis of ATP in the presence of single-stranded DNA, the ATP-dependent uptake of single-stranded DNA by duplex DNA, and the ATP-dependent hybridization of homologous single-stranded DNAs. It interacts with LexA causing its activation and leading to its autocatalytic cleavage. The polypeptide is Protein RecA (Histophilus somni (strain 129Pt) (Haemophilus somnus)).